A 461-amino-acid polypeptide reads, in one-letter code: uncharacterized protein (461 aa).

The next 13 helical transmembrane spans lie at 13-33, 54-74, 81-101, 120-140, 170-190, 211-231, 256-276, 286-306, 314-334, 349-369, 377-397, 399-419, and 439-459; these read GIIF…LPFE, ALHV…LGLV, VGFA…ATAL, GNLF…SMWM, VFVL…TLVG, YGLP…YIIF, FIIF…NPFI, IASF…STGV, SNTD…SAVL, FMID…FIIF, TASA…LGMP, IGLA…PVAT, and VGFL…YMFW.

The protein belongs to the SLC13A/DASS transporter (TC 2.A.47) family. NADC subfamily.

It localises to the cell membrane. This is an uncharacterized protein from Haemophilus influenzae (strain ATCC 51907 / DSM 11121 / KW20 / Rd).